A 573-amino-acid polypeptide reads, in one-letter code: Proline--tRNA ligase (573 aa).

It belongs to the class-II aminoacyl-tRNA synthetase family. ProS type 1 subfamily. Homodimer.

It is found in the cytoplasm. It catalyses the reaction tRNA(Pro) + L-proline + ATP = L-prolyl-tRNA(Pro) + AMP + diphosphate. Catalyzes the attachment of proline to tRNA(Pro) in a two-step reaction: proline is first activated by ATP to form Pro-AMP and then transferred to the acceptor end of tRNA(Pro). As ProRS can inadvertently accommodate and process non-cognate amino acids such as alanine and cysteine, to avoid such errors it has two additional distinct editing activities against alanine. One activity is designated as 'pretransfer' editing and involves the tRNA(Pro)-independent hydrolysis of activated Ala-AMP. The other activity is designated 'posttransfer' editing and involves deacylation of mischarged Ala-tRNA(Pro). The misacylated Cys-tRNA(Pro) is not edited by ProRS. This is Proline--tRNA ligase from Citrifermentans bemidjiense (strain ATCC BAA-1014 / DSM 16622 / JCM 12645 / Bem) (Geobacter bemidjiensis).